Here is a 95-residue protein sequence, read N- to C-terminus: Aspartyl/glutamyl-tRNA(Asn/Gln) amidotransferase subunit C (95 aa).

This sequence belongs to the GatC family. As to quaternary structure, heterotrimer of A, B and C subunits.

The catalysed reaction is L-glutamyl-tRNA(Gln) + L-glutamine + ATP + H2O = L-glutaminyl-tRNA(Gln) + L-glutamate + ADP + phosphate + H(+). It carries out the reaction L-aspartyl-tRNA(Asn) + L-glutamine + ATP + H2O = L-asparaginyl-tRNA(Asn) + L-glutamate + ADP + phosphate + 2 H(+). Its function is as follows. Allows the formation of correctly charged Asn-tRNA(Asn) or Gln-tRNA(Gln) through the transamidation of misacylated Asp-tRNA(Asn) or Glu-tRNA(Gln) in organisms which lack either or both of asparaginyl-tRNA or glutaminyl-tRNA synthetases. The reaction takes place in the presence of glutamine and ATP through an activated phospho-Asp-tRNA(Asn) or phospho-Glu-tRNA(Gln). This is Aspartyl/glutamyl-tRNA(Asn/Gln) amidotransferase subunit C from Alkalilimnicola ehrlichii (strain ATCC BAA-1101 / DSM 17681 / MLHE-1).